A 454-amino-acid polypeptide reads, in one-letter code: Peroxisome assembly protein 10 (454 aa).

Residues 1 to 23 are Peroxisomal matrix-facing; that stretch reads MATQPPPARPPPPLTSSPYPYAA. Residues 24 to 53 form a helical membrane-spanning segment; the sequence is APDIIRAHQKDAYFQGVLANRLSDLHRRLR. Residue Gly-54 is a topological domain, cytoplasmic. The helical transmembrane segment at 55–76 threads the bilayer; that stretch reads ARSAHAWAAETRTFAAALYLCL. Topologically, residues 77–132 are peroxisomal matrix; sequence TTLLGNRTLGEEYCDLVQVEEAPSKLFASSSSKAADDHIYENGLGGGGDGGPLLPS. The helical transmembrane segment at 133–165 threads the bilayer; that stretch reads LPRRAGYILTAIVLPHLASRALPSVRSAIRKRL. The Cytoplasmic segment spans residues 166–201; the sequence is QSRLATLSRRRQQTGTKSGSGRGGRGGGGGITEYRV. A disordered region spans residues 171–194; it reads TLSRRRQQTGTKSGSGRGGRGGGG. The span at 183 to 194 shows a compositional bias: gly residues; that stretch reads SGSGRGGRGGGG. Residues 202–229 traverse the membrane as a helical segment; that stretch reads LRYLLTHLTPLTSGAHFRAATLAVFYFT. The Peroxisomal matrix portion of the chain corresponds to 230–276; it reads GAYYELSKWVWGLRYVFTTRAGRVVDDDHNRHHHSPQHGGGNGGRAG. A helical transmembrane segment spans residues 277 to 296; sequence YEVLGVLLVVQMAVRAWLHV. At 297 to 454 the chain is on the cytoplasmic side; the sequence is REQLSSGSVA…VQHILPLRAA (158 aa). Residues 302–329 form a disordered region; the sequence is SGSVAGGGGEEEEDGEDGFRERTAFGPG. Cys-402, Cys-405, Cys-417, His-419, Cys-422, Cys-425, Cys-436, and Cys-439 together coordinate Zn(2+). The RING-type zinc finger occupies 402–440; sequence CTLCLEELKDPAATQCGHVFCWACIGDWVREKPECPLCR.

It belongs to the pex2/pex10/pex12 family. In terms of assembly, component of the PEX2-PEX10-PEX12 retrotranslocation channel, composed of PEX2, PEX10 and PEX12.

The protein resides in the peroxisome membrane. It catalyses the reaction S-ubiquitinyl-[E2 ubiquitin-conjugating enzyme]-L-cysteine + [acceptor protein]-L-lysine = [E2 ubiquitin-conjugating enzyme]-L-cysteine + N(6)-ubiquitinyl-[acceptor protein]-L-lysine.. It participates in protein modification; protein ubiquitination. With respect to regulation, the E3 ubiquitin-protein ligase activity is stimulated by PEX12. E3 ubiquitin-protein ligase component of a retrotranslocation channel required for peroxisome organization by mediating export of the PEX5 receptor from peroxisomes to the cytosol, thereby promoting PEX5 recycling. The retrotranslocation channel is composed of PEX2, PEX10 and PEX12; each subunit contributing transmembrane segments that coassemble into an open channel that specifically allows the passage of PEX5 through the peroxisomal membrane. PEX10 also regulates PEX5 recycling by acting as a E3 ubiquitin-protein ligase. When PEX5 recycling is compromised, PEX10 catalyzes polyubiquitination of PEX5 during its passage through the retrotranslocation channel, leading to its degradation. The sequence is that of Peroxisome assembly protein 10 from Thermothelomyces thermophilus (strain ATCC 42464 / BCRC 31852 / DSM 1799) (Sporotrichum thermophile).